The following is a 225-amino-acid chain: Endonuclease V (225 aa).

Mg(2+)-binding residues include Asp-43 and Asp-110. Interaction with target DNA stretches follow at residues 139-141 (KSR) and 214-221 (HIYTQRLK).

The protein belongs to the endonuclease V family. Requires Mg(2+) as cofactor.

The protein resides in the cytoplasm. The enzyme catalyses Endonucleolytic cleavage at apurinic or apyrimidinic sites to products with a 5'-phosphate.. DNA repair enzyme involved in the repair of deaminated bases. Selectively cleaves double-stranded DNA at the second phosphodiester bond 3' to a deoxyinosine leaving behind the intact lesion on the nicked DNA. In vitro, can also cleave single-stranded substrates with inosine, double-stranded DNA with apurinic sites, or DNA sites with uracil or a mismatched base. When present in molar excess, two protein molecules can bind to the same DNA substrate and effect cleavage of both strands (in vitro). The polypeptide is Endonuclease V (Thermotoga maritima (strain ATCC 43589 / DSM 3109 / JCM 10099 / NBRC 100826 / MSB8)).